A 300-amino-acid chain; its full sequence is Light-independent protochlorophyllide reductase iron-sulfur ATP-binding protein (300 aa).

ATP is bound by residues 43–48 (GIGKST) and Lys-72. Ser-47 is a Mg(2+) binding site. Residues Cys-128 and Cys-162 each coordinate [4Fe-4S] cluster. Residue 213-214 (NR) coordinates ATP.

The protein belongs to the NifH/BchL/ChlL family. As to quaternary structure, homodimer. Protochlorophyllide reductase is composed of three subunits; ChlL, ChlN and ChlB. Requires [4Fe-4S] cluster as cofactor.

The catalysed reaction is chlorophyllide a + oxidized 2[4Fe-4S]-[ferredoxin] + 2 ADP + 2 phosphate = protochlorophyllide a + reduced 2[4Fe-4S]-[ferredoxin] + 2 ATP + 2 H2O. It functions in the pathway porphyrin-containing compound metabolism; chlorophyll biosynthesis (light-independent). Functionally, component of the dark-operative protochlorophyllide reductase (DPOR) that uses Mg-ATP and reduced ferredoxin to reduce ring D of protochlorophyllide (Pchlide) to form chlorophyllide a (Chlide). This reaction is light-independent. The L component serves as a unique electron donor to the NB-component of the complex, and binds Mg-ATP. The protein is Light-independent protochlorophyllide reductase iron-sulfur ATP-binding protein of Synechococcus sp. (strain RCC307).